A 194-amino-acid polypeptide reads, in one-letter code: dCTP deaminase (194 aa).

DCTP is bound by residues 110–115 (RSSLAR), Asp-128, 136–138 (VLE), Tyr-171, Lys-178, and Gln-182. Catalysis depends on Glu-138, which acts as the Proton donor/acceptor.

Belongs to the dCTP deaminase family. As to quaternary structure, homotrimer.

The enzyme catalyses dCTP + H2O + H(+) = dUTP + NH4(+). Its pathway is pyrimidine metabolism; dUMP biosynthesis; dUMP from dCTP (dUTP route): step 1/2. Functionally, catalyzes the deamination of dCTP to dUTP. The sequence is that of dCTP deaminase from Pseudoalteromonas translucida (strain TAC 125).